We begin with the raw amino-acid sequence, 273 residues long: DnaJ homolog subfamily C member 27 (273 aa).

Residues 23–30 (GNAEVGKS), 71–75 (DMAGH), and 134–137 (NKVD) contribute to the GTP site. The J domain occupies 217 to 273 (DSWDMLGVKPGATREEVNKAYRKLAVLLHPDKCVAPGSEDAFKAVVNARTSLLKNIK).

The protein belongs to the small GTPase superfamily. Rab family.

It localises to the nucleus. Its function is as follows. GTPase possibly involved in regulation of the MEK/ERK pathway. The protein is DnaJ homolog subfamily C member 27 (dnajc27) of Danio rerio (Zebrafish).